A 244-amino-acid polypeptide reads, in one-letter code: NAD(P)H-quinone oxidoreductase subunit K (244 aa).

[4Fe-4S] cluster contacts are provided by Cys60, Cys61, Cys125, and Cys156.

It belongs to the complex I 20 kDa subunit family. As to quaternary structure, NDH-1 can be composed of about 15 different subunits; different subcomplexes with different compositions have been identified which probably have different functions. [4Fe-4S] cluster is required as a cofactor.

It localises to the cellular thylakoid membrane. It carries out the reaction a plastoquinone + NADH + (n+1) H(+)(in) = a plastoquinol + NAD(+) + n H(+)(out). The enzyme catalyses a plastoquinone + NADPH + (n+1) H(+)(in) = a plastoquinol + NADP(+) + n H(+)(out). Its function is as follows. NDH-1 shuttles electrons from an unknown electron donor, via FMN and iron-sulfur (Fe-S) centers, to quinones in the respiratory and/or the photosynthetic chain. The immediate electron acceptor for the enzyme in this species is believed to be plastoquinone. Couples the redox reaction to proton translocation, and thus conserves the redox energy in a proton gradient. Cyanobacterial NDH-1 also plays a role in inorganic carbon-concentration. The sequence is that of NAD(P)H-quinone oxidoreductase subunit K from Prochlorococcus marinus (strain AS9601).